A 603-amino-acid chain; its full sequence is Elongation factor 4 (603 aa).

The tr-type G domain occupies 7 to 189 (VRIRNFCIIA…AVVERVPPPP (183 aa)). GTP-binding positions include 19 to 24 (DHGKST) and 136 to 139 (NKID).

The protein belongs to the TRAFAC class translation factor GTPase superfamily. Classic translation factor GTPase family. LepA subfamily.

It is found in the cell inner membrane. It catalyses the reaction GTP + H2O = GDP + phosphate + H(+). Required for accurate and efficient protein synthesis under certain stress conditions. May act as a fidelity factor of the translation reaction, by catalyzing a one-codon backward translocation of tRNAs on improperly translocated ribosomes. Back-translocation proceeds from a post-translocation (POST) complex to a pre-translocation (PRE) complex, thus giving elongation factor G a second chance to translocate the tRNAs correctly. Binds to ribosomes in a GTP-dependent manner. This is Elongation factor 4 from Nostoc sp. (strain PCC 7120 / SAG 25.82 / UTEX 2576).